We begin with the raw amino-acid sequence, 90 residues long: Alpha-latrotoxin associated low molecular weight protein (90 aa).

The N-terminal stretch at 1–18 is a signal peptide; it reads MNKLFFVVFLCLIISVLA.

This sequence belongs to the arthropod CHH/MIH/GIH/VIH hormone family. As to expression, expressed by the venom gland.

It localises to the secreted. Its function is as follows. May increase the toxicity of alpha-latrotoxin and/or other venom components. Is non-toxic to mice and to the cockroach Periplaneta americana. This is Alpha-latrotoxin associated low molecular weight protein from Latrodectus geometricus (Brown widow spider).